The sequence spans 183 residues: Holliday junction branch migration complex subunit RuvA (183 aa).

Residues 1–64 (MVVGIEGIIT…EDSNKFYGFL (64 aa)) are domain I. The domain II stretch occupies residues 65–139 (DKDEQKMFEM…DTKTKLENVS (75 aa)). S139 is a region of interest (flexible linker). A domain III region spans residues 139–183 (SDDKSEALAALLTLGFKQEKIISVLASAQATGTSELIKEALKKLG).

This sequence belongs to the RuvA family. Homotetramer. Forms an RuvA(8)-RuvB(12)-Holliday junction (HJ) complex. HJ DNA is sandwiched between 2 RuvA tetramers; dsDNA enters through RuvA and exits via RuvB. An RuvB hexamer assembles on each DNA strand where it exits the tetramer. Each RuvB hexamer is contacted by two RuvA subunits (via domain III) on 2 adjacent RuvB subunits; this complex drives branch migration. In the full resolvosome a probable DNA-RuvA(4)-RuvB(12)-RuvC(2) complex forms which resolves the HJ.

It is found in the cytoplasm. Functionally, the RuvA-RuvB-RuvC complex processes Holliday junction (HJ) DNA during genetic recombination and DNA repair, while the RuvA-RuvB complex plays an important role in the rescue of blocked DNA replication forks via replication fork reversal (RFR). RuvA specifically binds to HJ cruciform DNA, conferring on it an open structure. The RuvB hexamer acts as an ATP-dependent pump, pulling dsDNA into and through the RuvAB complex. HJ branch migration allows RuvC to scan DNA until it finds its consensus sequence, where it cleaves and resolves the cruciform DNA. This Campylobacter jejuni subsp. jejuni serotype O:23/36 (strain 81-176) protein is Holliday junction branch migration complex subunit RuvA.